Reading from the N-terminus, the 340-residue chain is Protein phosphatase PTC7 homolog fig (340 aa).

Residues 58 to 314 (RAQAETIQAP…DDITVVLASV (257 aa)) form the PPM-type phosphatase domain. Mn(2+) contacts are provided by Asp-90, Gly-91, and Asp-236.

The protein belongs to the PP2C family. Requires Mg(2+) as cofactor. The cofactor is Mn(2+).

The catalysed reaction is O-phospho-L-seryl-[protein] + H2O = L-seryl-[protein] + phosphate. The enzyme catalyses O-phospho-L-threonyl-[protein] + H2O = L-threonyl-[protein] + phosphate. The sequence is that of Protein phosphatase PTC7 homolog fig from Drosophila pseudoobscura pseudoobscura (Fruit fly).